Reading from the N-terminus, the 321-residue chain is Coiled-coil domain-containing protein 42-like 1 (321 aa).

Coiled coils occupy residues 36 to 144 (IRRL…EKCH) and 202 to 229 (IVQF…WELR).

This sequence belongs to the CFAP73 family.

This chain is Coiled-coil domain-containing protein 42-like 1, found in Xenopus laevis (African clawed frog).